Consider the following 620-residue polypeptide: Chaperone protein HscA homolog (620 aa).

The protein belongs to the heat shock protein 70 family.

Functionally, chaperone involved in the maturation of iron-sulfur cluster-containing proteins. Has a low intrinsic ATPase activity which is markedly stimulated by HscB. This chain is Chaperone protein HscA homolog, found in Paracidovorax citrulli (strain AAC00-1) (Acidovorax citrulli).